Here is a 123-residue protein sequence, read N- to C-terminus: Small ribosomal subunit protein uS12 (123 aa).

Aspartate 89 bears the 3-methylthioaspartic acid mark.

This sequence belongs to the universal ribosomal protein uS12 family. In terms of assembly, part of the 30S ribosomal subunit. Contacts proteins S8 and S17. May interact with IF1 in the 30S initiation complex.

In terms of biological role, with S4 and S5 plays an important role in translational accuracy. Interacts with and stabilizes bases of the 16S rRNA that are involved in tRNA selection in the A site and with the mRNA backbone. Located at the interface of the 30S and 50S subunits, it traverses the body of the 30S subunit contacting proteins on the other side and probably holding the rRNA structure together. The combined cluster of proteins S8, S12 and S17 appears to hold together the shoulder and platform of the 30S subunit. The sequence is that of Small ribosomal subunit protein uS12 from Sinorhizobium medicae (strain WSM419) (Ensifer medicae).